The primary structure comprises 269 residues: Type II iodothyronine deiodinase (269 aa).

Residues 1–9 are Lumenal-facing; sequence MGILSVDLL. Residues 10–34 form a helical; Signal-anchor for type III membrane protein membrane-spanning segment; that stretch reads ITLQILPVFFSNCLFLALYDSVILL. Residues 35–269 are Cytoplasmic-facing; that stretch reads KHVVLLLSRS…KNFSKRUKLD (235 aa). The interval 83–103 is disordered; sequence NSSVVHVSSPEGGDTSGNGAQ. The active site involves Sec-133. 2 non-standard amino acids (selenocysteine) are found at residues Sec-133 and Sec-266.

Belongs to the iodothyronine deiodinase family. Predominantly monomer. Can form homodimers but homodimerization is not essential for enzyme activity. Interacts with USP20 and USP33. Interacts with MARCHF6. Ubiquitinated by MARCHF6, leading to its degradation by the proteasome. Deubiquitinated by USP20 and USP33. Highly expressed in thyroid, mammary and pituitary glands, then in hypothalamus. Low levels detected in diaphragm, heart, kidney and lung.

It is found in the endoplasmic reticulum membrane. It carries out the reaction 3,3',5-triiodo-L-thyronine + iodide + A + H(+) = L-thyroxine + AH2. The enzyme catalyses 3,3'-diiodo-L-thyronine + iodide + A + H(+) = 3,3',5'-triiodo-L-thyronine + AH2. It catalyses the reaction 3'-iodo-L-thyronine + iodide + A + H(+) = 3',5'-diiodo-L-thyronine + AH2. The catalysed reaction is 3,3'-diiodothyronamine + iodide + A + H(+) = 3,3',5'-triiodothyronamine + AH2. It carries out the reaction 3'-iodothyronamine + iodide + A + H(+) = 3',5'-diiodothyronamine + AH2. Plays a crucial role in the metabolism of thyroid hormones (TH) and has specific roles in TH activation and inactivation by deiodination. Catalyzes the deiodination of L-thyroxine (T4) to 3,5,3'-triiodothyronine (T3), 3,3',5'-triiodothyronine (rT3) to 3,3'-diiodothyronine (3,3'-T2) and 3',5'-diiodothyronine (3',5'-T2) to 3'-monoiodothyronine (3'-T1) via outer-ring deiodination (ORD). Catalyzes the phenolic ring deiodinations of 3,3',5'-triiodothyronamine and 3',5'- diiodothyronamine. In Bos taurus (Bovine), this protein is Type II iodothyronine deiodinase (DIO2).